The chain runs to 433 residues: ATP-dependent protease ATPase subunit HslU (433 aa).

Residues valine 18, 60–65 (GVGKTE), aspartate 246, glutamate 311, and arginine 383 contribute to the ATP site.

This sequence belongs to the ClpX chaperone family. HslU subfamily. In terms of assembly, a double ring-shaped homohexamer of HslV is capped on each side by a ring-shaped HslU homohexamer. The assembly of the HslU/HslV complex is dependent on binding of ATP.

Its subcellular location is the cytoplasm. In terms of biological role, ATPase subunit of a proteasome-like degradation complex; this subunit has chaperone activity. The binding of ATP and its subsequent hydrolysis by HslU are essential for unfolding of protein substrates subsequently hydrolyzed by HslV. HslU recognizes the N-terminal part of its protein substrates and unfolds these before they are guided to HslV for hydrolysis. The sequence is that of ATP-dependent protease ATPase subunit HslU from Rhodopseudomonas palustris (strain BisB5).